A 728-amino-acid chain; its full sequence is Catalase-peroxidase 1 (728 aa).

A cross-link (tryptophyl-tyrosyl-methioninium (Trp-Tyr) (with M-244)) is located at residues 91–218 (WHSAGTYRTA…LAAVQMGLIY (128 aa)). His92 functions as the Proton acceptor in the catalytic mechanism. The segment at residues 218–244 (YVNPEGPDGNPDPVAAAHDIRETFARM) is a cross-link (tryptophyl-tyrosyl-methioninium (Tyr-Met) (with W-91)). His259 serves as a coordination point for heme b.

The protein belongs to the peroxidase family. Peroxidase/catalase subfamily. Homodimer or homotetramer. Heme b is required as a cofactor. Post-translationally, formation of the three residue Trp-Tyr-Met cross-link is important for the catalase, but not the peroxidase activity of the enzyme.

The enzyme catalyses H2O2 + AH2 = A + 2 H2O. It catalyses the reaction 2 H2O2 = O2 + 2 H2O. Functionally, bifunctional enzyme with both catalase and broad-spectrum peroxidase activity. This Burkholderia cenocepacia (strain HI2424) protein is Catalase-peroxidase 1.